The chain runs to 213 residues: Pyridoxine/pyridoxamine 5'-phosphate oxidase (213 aa).

FMN contacts are provided by residues 60–65, 75–76, K82, and Q104; these read RMVLMK and YS. Position 65 (K65) interacts with substrate. Substrate contacts are provided by Y122 and R126. Residues 139–140 and W184 each bind FMN; that span reads QS. 190–192 is a binding site for substrate; sequence RLH. FMN is bound at residue R194.

Belongs to the pyridoxamine 5'-phosphate oxidase family. In terms of assembly, homodimer. It depends on FMN as a cofactor.

It catalyses the reaction pyridoxamine 5'-phosphate + O2 + H2O = pyridoxal 5'-phosphate + H2O2 + NH4(+). It carries out the reaction pyridoxine 5'-phosphate + O2 = pyridoxal 5'-phosphate + H2O2. It functions in the pathway cofactor metabolism; pyridoxal 5'-phosphate salvage; pyridoxal 5'-phosphate from pyridoxamine 5'-phosphate: step 1/1. It participates in cofactor metabolism; pyridoxal 5'-phosphate salvage; pyridoxal 5'-phosphate from pyridoxine 5'-phosphate: step 1/1. Its function is as follows. Catalyzes the oxidation of either pyridoxine 5'-phosphate (PNP) or pyridoxamine 5'-phosphate (PMP) into pyridoxal 5'-phosphate (PLP). In Nitrobacter hamburgensis (strain DSM 10229 / NCIMB 13809 / X14), this protein is Pyridoxine/pyridoxamine 5'-phosphate oxidase.